We begin with the raw amino-acid sequence, 475 residues long: NADH-quinone oxidoreductase subunit N (475 aa).

The next 14 membrane-spanning stretches (helical) occupy residues 5–25, 32–52, 71–91, 99–119, 121–141, 155–175, 193–213, 232–252, 266–286, 294–314, 322–342, 366–386, 389–409, and 439–459; these read LALP…FGVV, FLSC…LVVM, FMKI…VGYA, FEFP…ASSE, LMTL…LCAF, YFVL…LVYG, STAV…GLTF, PTSV…ALLL, WQIL…LAAI, LMAY…CAGT, LVYL…IIAM, ATAM…AGFF, MMVF…IGVV, and LSLS…LLVL.

It belongs to the complex I subunit 2 family. In terms of assembly, NDH-1 is composed of 14 different subunits. Subunits NuoA, H, J, K, L, M, N constitute the membrane sector of the complex.

The protein resides in the cell inner membrane. It catalyses the reaction a quinone + NADH + 5 H(+)(in) = a quinol + NAD(+) + 4 H(+)(out). Its function is as follows. NDH-1 shuttles electrons from NADH, via FMN and iron-sulfur (Fe-S) centers, to quinones in the respiratory chain. The immediate electron acceptor for the enzyme in this species is believed to be ubiquinone. Couples the redox reaction to proton translocation (for every two electrons transferred, four hydrogen ions are translocated across the cytoplasmic membrane), and thus conserves the redox energy in a proton gradient. The polypeptide is NADH-quinone oxidoreductase subunit N (Gluconacetobacter diazotrophicus (strain ATCC 49037 / DSM 5601 / CCUG 37298 / CIP 103539 / LMG 7603 / PAl5)).